The sequence spans 328 residues: 4-hydroxy-3-methylbut-2-enyl diphosphate reductase (328 aa).

A [4Fe-4S] cluster-binding site is contributed by Cys-13. (2E)-4-hydroxy-3-methylbut-2-enyl diphosphate-binding residues include His-41 and His-75. Positions 41 and 75 each coordinate dimethylallyl diphosphate. 2 residues coordinate isopentenyl diphosphate: His-41 and His-75. Cys-97 contributes to the [4Fe-4S] cluster binding site. His-125 provides a ligand contact to (2E)-4-hydroxy-3-methylbut-2-enyl diphosphate. His-125 is a binding site for dimethylallyl diphosphate. Residue His-125 coordinates isopentenyl diphosphate. The active-site Proton donor is the Glu-127. Position 168 (Thr-168) interacts with (2E)-4-hydroxy-3-methylbut-2-enyl diphosphate. [4Fe-4S] cluster is bound at residue Cys-225. The (2E)-4-hydroxy-3-methylbut-2-enyl diphosphate site is built by Ser-253, Ser-254, Asn-255, and Ser-302. Residues Ser-253, Ser-254, Asn-255, and Ser-302 each coordinate dimethylallyl diphosphate. Ser-253, Ser-254, Asn-255, and Ser-302 together coordinate isopentenyl diphosphate.

The protein belongs to the IspH family. [4Fe-4S] cluster serves as cofactor.

The catalysed reaction is isopentenyl diphosphate + 2 oxidized [2Fe-2S]-[ferredoxin] + H2O = (2E)-4-hydroxy-3-methylbut-2-enyl diphosphate + 2 reduced [2Fe-2S]-[ferredoxin] + 2 H(+). The enzyme catalyses dimethylallyl diphosphate + 2 oxidized [2Fe-2S]-[ferredoxin] + H2O = (2E)-4-hydroxy-3-methylbut-2-enyl diphosphate + 2 reduced [2Fe-2S]-[ferredoxin] + 2 H(+). It functions in the pathway isoprenoid biosynthesis; dimethylallyl diphosphate biosynthesis; dimethylallyl diphosphate from (2E)-4-hydroxy-3-methylbutenyl diphosphate: step 1/1. The protein operates within isoprenoid biosynthesis; isopentenyl diphosphate biosynthesis via DXP pathway; isopentenyl diphosphate from 1-deoxy-D-xylulose 5-phosphate: step 6/6. Functionally, catalyzes the conversion of 1-hydroxy-2-methyl-2-(E)-butenyl 4-diphosphate (HMBPP) into a mixture of isopentenyl diphosphate (IPP) and dimethylallyl diphosphate (DMAPP). Acts in the terminal step of the DOXP/MEP pathway for isoprenoid precursor biosynthesis. In Chlorobium chlorochromatii (strain CaD3), this protein is 4-hydroxy-3-methylbut-2-enyl diphosphate reductase.